A 265-amino-acid chain; its full sequence is Putative methyltransferase 235L (265 aa).

A signal peptide spans 1–17 (MDICICYFFTILTTISC).

The protein belongs to the methyltransferase superfamily.

The polypeptide is Putative methyltransferase 235L (Acheta domesticus (House cricket)).